Consider the following 67-residue polypeptide: ATP synthase F(0) complex subunit 8 (67 aa).

The helical transmembrane segment at 8–24 (TWFITIISSMITLFILF) threads the bilayer. K54 bears the N6-acetyllysine; alternate mark. Position 54 is an N6-succinyllysine; alternate (K54). K57 is modified (N6-acetyllysine).

This sequence belongs to the ATPase protein 8 family. Component of the ATP synthase complex composed at least of ATP5F1A/subunit alpha, ATP5F1B/subunit beta, ATP5MC1/subunit c (homooctomer), MT-ATP6/subunit a, MT-ATP8/subunit 8, ATP5ME/subunit e, ATP5MF/subunit f, ATP5MG/subunit g, ATP5MK/subunit k, ATP5MJ/subunit j, ATP5F1C/subunit gamma, ATP5F1D/subunit delta, ATP5F1E/subunit epsilon, ATP5PF/subunit F6, ATP5PB/subunit b, ATP5PD/subunit d, ATP5PO/subunit OSCP. ATP synthase complex consists of a soluble F(1) head domain (subunits alpha(3) and beta(3)) - the catalytic core - and a membrane F(0) domain - the membrane proton channel (subunits c, a, 8, e, f, g, k and j). These two domains are linked by a central stalk (subunits gamma, delta, and epsilon) rotating inside the F1 region and a stationary peripheral stalk (subunits F6, b, d, and OSCP). Interacts with PRICKLE3.

Its subcellular location is the mitochondrion membrane. Subunit 8, of the mitochondrial membrane ATP synthase complex (F(1)F(0) ATP synthase or Complex V) that produces ATP from ADP in the presence of a proton gradient across the membrane which is generated by electron transport complexes of the respiratory chain. ATP synthase complex consist of a soluble F(1) head domain - the catalytic core - and a membrane F(1) domain - the membrane proton channel. These two domains are linked by a central stalk rotating inside the F(1) region and a stationary peripheral stalk. During catalysis, ATP synthesis in the catalytic domain of F(1) is coupled via a rotary mechanism of the central stalk subunits to proton translocation. In vivo, can only synthesize ATP although its ATP hydrolase activity can be activated artificially in vitro. Part of the complex F(0) domain. This is ATP synthase F(0) complex subunit 8 from Mus musculus (Mouse).